The following is a 360-amino-acid chain: Leukotriene B4 receptor 2 (360 aa).

Topologically, residues 1–24 (MSVCYRPPGNETLLSWKGSRATGT) are extracellular. Residue N10 is glycosylated (N-linked (GlcNAc...) asparagine). The chain crosses the membrane as a helical span at residues 25 to 45 (AFLLLAALLGLPGNGFVVWSL). At 46 to 60 (AGWRPTAGRPLAATL) the chain is on the cytoplasmic side. Residues 61–81 (VLHLALADGAVLLLTPLFVAF) traverse the membrane as a helical segment. The Extracellular segment spans residues 82-96 (LSQEAWPLGQVGCKA). A helical membrane pass occupies residues 97-117 (VYYVCALSMYASVLLTGLLSL). At 118 to 140 (QRCLAVTRPFLAPRLRSPALARR) the chain is on the cytoplasmic side. A helical membrane pass occupies residues 141-161 (LLLGVWLAALVLAVPAAVYRH). Residues 162–185 (LWGGRVCQLCHPSPVHAAAHLSLE) lie on the Extracellular side of the membrane. Residues 186-206 (TLTAFVLPFGTVLGCYGVTLA) form a helical membrane-spanning segment. Topologically, residues 207–224 (RLRGARWGSGRQGTRVGR) are cytoplasmic. Residues 225 to 245 (LVSAIVLAFGLLWAPYHAVNL) form a helical membrane-spanning segment. At 246-275 (LQAVAALAPPEGPLARLGGAGQAARAGTTA) the chain is on the extracellular side. A helical transmembrane segment spans residues 276-296 (LAFFSSSVNPVLYVFTAGDLL). The Cytoplasmic portion of the chain corresponds to 297–360 (PRAGPRFLTR…GKTEKDSQEW (64 aa)). Residues 311-360 (SGEARGGSRSREGTMELRTTPKLKVMGQGRGNGDPGGGDGGKTEKDSQEW) are disordered. Residues 338-350 (QGRGNGDPGGGDG) show a composition bias toward gly residues. Positions 351–360 (GKTEKDSQEW) are enriched in basic and acidic residues.

This sequence belongs to the G-protein coupled receptor 1 family.

Its subcellular location is the cell membrane. Low-affinity receptor for leukotrienes including leukotriene B4. Mediates chemotaxis of granulocytes and macrophages. The response is mediated via G-proteins that activate a phosphatidylinositol-calcium second messenger system. This Mus musculus (Mouse) protein is Leukotriene B4 receptor 2 (Ltb4r2).